The chain runs to 142 residues: Large ribosomal subunit protein uL11 (142 aa).

The protein belongs to the universal ribosomal protein uL11 family. As to quaternary structure, part of the ribosomal stalk of the 50S ribosomal subunit. Interacts with L10 and the large rRNA to form the base of the stalk. L10 forms an elongated spine to which L12 dimers bind in a sequential fashion forming a multimeric L10(L12)X complex. One or more lysine residues are methylated.

Forms part of the ribosomal stalk which helps the ribosome interact with GTP-bound translation factors. The protein is Large ribosomal subunit protein uL11 of Xylella fastidiosa (strain 9a5c).